The primary structure comprises 187 residues: Elongation factor P (187 aa).

The protein belongs to the elongation factor P family.

It is found in the cytoplasm. The protein operates within protein biosynthesis; polypeptide chain elongation. Involved in peptide bond synthesis. Stimulates efficient translation and peptide-bond synthesis on native or reconstituted 70S ribosomes in vitro. Probably functions indirectly by altering the affinity of the ribosome for aminoacyl-tRNA, thus increasing their reactivity as acceptors for peptidyl transferase. This Magnetococcus marinus (strain ATCC BAA-1437 / JCM 17883 / MC-1) protein is Elongation factor P.